The primary structure comprises 246 residues: UDP-N-acetyl-D-mannosaminuronic acid transferase (246 aa).

The protein belongs to the glycosyltransferase 26 family.

It catalyses the reaction UDP-N-acetyl-alpha-D-mannosaminouronate + N-acetyl-alpha-D-glucosaminyl-di-trans,octa-cis-undecaprenyl diphosphate = beta-D-ManNAcA-(1-&gt;4)-alpha-D-GlcNAc-di-trans,octa-cis-undecaprenyl diphosphate + UDP + H(+). Its pathway is bacterial outer membrane biogenesis; enterobacterial common antigen biosynthesis. Its function is as follows. Catalyzes the synthesis of Und-PP-GlcNAc-ManNAcA (Lipid II), the second lipid-linked intermediate involved in enterobacterial common antigen (ECA) synthesis. This is UDP-N-acetyl-D-mannosaminuronic acid transferase from Escherichia coli O157:H7.